A 244-amino-acid polypeptide reads, in one-letter code: Phosphate propanoyltransferase (244 aa).

52 to 54 (ISA) provides a ligand contact to CoA. Zn(2+)-binding residues include His56 and His58. Arg106 is a binding site for CoA. Residue Arg112 participates in phosphate binding. The Zn(2+) site is built by Glu118, His166, His168, and His214. Asn221 provides a ligand contact to CoA.

This sequence belongs to the PduL family. In terms of assembly, full-length protein forms large oligomers. Possible homotrimer and monomer, when purified in the absence of the encapsulation peptide (EP, residues 1-20). The EP may influence oligomerization. Zn(2+) is required as a cofactor.

Its subcellular location is the bacterial microcompartment. The enzyme catalyses propanoyl-CoA + phosphate = propanoyl phosphate + CoA. In terms of biological role, part of a bacterial microcompartment (BMC) locus required for growth on plant and algal sugars, including L-fucose and L-rhamnose. Thought to be active on lactyl-CoA in a lactaldehyde-degradation pathway. CoA is regenerated within the BMC via this enzyme, although there must also be cofactor transport across the BMC. Directly targeted to the BMC. The protein is Phosphate propanoyltransferase of Planctopirus limnophila (strain ATCC 43296 / DSM 3776 / IFAM 1008 / Mu 290) (Planctomyces limnophilus).